We begin with the raw amino-acid sequence, 176 residues long: Disulfide bond formation protein B (176 aa).

At M1 to A14 the chain is on the cytoplasmic side. A helical membrane pass occupies residues W15 to W31. Over F32–C49 the chain is Periplasmic. An intrachain disulfide couples C41 to C44. Residues A50–P65 traverse the membrane as a helical segment. The Cytoplasmic segment spans residues K66–Y71. Residues V72–Y89 form a helical membrane-spanning segment. Topologically, residues E90–Q144 are periplasmic. An intrachain disulfide couples C104 to C130. Residues W145–A163 form a helical membrane-spanning segment. Residues Q164–R176 lie on the Cytoplasmic side of the membrane.

The protein belongs to the DsbB family.

The protein localises to the cell inner membrane. In terms of biological role, required for disulfide bond formation in some periplasmic proteins. Acts by oxidizing the DsbA protein. The protein is Disulfide bond formation protein B of Salmonella paratyphi A (strain ATCC 9150 / SARB42).